Here is a 157-residue protein sequence, read N- to C-terminus: Peptide methionine sulfoxide reductase MsrA (157 aa).

Residue cysteine 10 is part of the active site.

Belongs to the MsrA Met sulfoxide reductase family.

The enzyme catalyses L-methionyl-[protein] + [thioredoxin]-disulfide + H2O = L-methionyl-(S)-S-oxide-[protein] + [thioredoxin]-dithiol. The catalysed reaction is [thioredoxin]-disulfide + L-methionine + H2O = L-methionine (S)-S-oxide + [thioredoxin]-dithiol. Functionally, has an important function as a repair enzyme for proteins that have been inactivated by oxidation. Catalyzes the reversible oxidation-reduction of methionine sulfoxide in proteins to methionine. The protein is Peptide methionine sulfoxide reductase MsrA of Clostridium perfringens (strain ATCC 13124 / DSM 756 / JCM 1290 / NCIMB 6125 / NCTC 8237 / Type A).